Consider the following 159-residue polypeptide: Cyclic pyranopterin monophosphate synthase (159 aa).

Residues 76 to 78 (LCH) and 114 to 115 (ME) each bind substrate. Residue Asp129 is part of the active site.

It belongs to the MoaC family. Homohexamer; trimer of dimers.

It catalyses the reaction (8S)-3',8-cyclo-7,8-dihydroguanosine 5'-triphosphate = cyclic pyranopterin phosphate + diphosphate. It functions in the pathway cofactor biosynthesis; molybdopterin biosynthesis. Functionally, catalyzes the conversion of (8S)-3',8-cyclo-7,8-dihydroguanosine 5'-triphosphate to cyclic pyranopterin monophosphate (cPMP). This is Cyclic pyranopterin monophosphate synthase from Shewanella oneidensis (strain ATCC 700550 / JCM 31522 / CIP 106686 / LMG 19005 / NCIMB 14063 / MR-1).